The following is a 564-amino-acid chain: Septation ring formation regulator EzrA (564 aa).

The Extracellular segment spans residues 1–4 (MVLY). A helical membrane pass occupies residues 5–23 (IILAIIVIILIAVGVLFYL). Over 24 to 564 (RSNKRQIIEK…KHIEEEVIKQ (541 aa)) the chain is Cytoplasmic. Coiled coils occupy residues 99–138 (SFNASQSEIDDANELMDSYEQSYQQQLEDVNEIIALYKDN), 190–223 (DGNYVQAHNHIAALNEQMKQLRSYMEEIPELIRE), 271–300 (LISRLELEEANDKLANINDKLDDMYDLIEH), 350–435 (VRQF…RRLL), and 471–550 (VKQL…ESVE).

This sequence belongs to the EzrA family.

Its subcellular location is the cell membrane. Negative regulator of FtsZ ring formation; modulates the frequency and position of FtsZ ring formation. Inhibits FtsZ ring formation at polar sites. Interacts either with FtsZ or with one of its binding partners to promote depolymerization. This chain is Septation ring formation regulator EzrA, found in Staphylococcus aureus (strain JH1).